The primary structure comprises 388 residues: Formate-dependent phosphoribosylglycinamide formyltransferase (388 aa).

N(1)-(5-phospho-beta-D-ribosyl)glycinamide-binding positions include 20 to 21 (EL) and E80. Residues R112, K153, 158–163 (SSGKGQ), 193–196 (EEFI), and E201 each bind ATP. The 190-residue stretch at 117 to 306 (RLAFEKLGLR…EFEIHARAIL (190 aa)) folds into the ATP-grasp domain. Mg(2+) contacts are provided by E265 and E277. N(1)-(5-phospho-beta-D-ribosyl)glycinamide contacts are provided by residues D284, K352, and 359 to 360 (RR).

Belongs to the PurK/PurT family. As to quaternary structure, homodimer.

It carries out the reaction N(1)-(5-phospho-beta-D-ribosyl)glycinamide + formate + ATP = N(2)-formyl-N(1)-(5-phospho-beta-D-ribosyl)glycinamide + ADP + phosphate + H(+). It participates in purine metabolism; IMP biosynthesis via de novo pathway; N(2)-formyl-N(1)-(5-phospho-D-ribosyl)glycinamide from N(1)-(5-phospho-D-ribosyl)glycinamide (formate route): step 1/1. Its function is as follows. Involved in the de novo purine biosynthesis. Catalyzes the transfer of formate to 5-phospho-ribosyl-glycinamide (GAR), producing 5-phospho-ribosyl-N-formylglycinamide (FGAR). Formate is provided by PurU via hydrolysis of 10-formyl-tetrahydrofolate. The sequence is that of Formate-dependent phosphoribosylglycinamide formyltransferase from Methanococcus maripaludis (strain C5 / ATCC BAA-1333).